We begin with the raw amino-acid sequence, 75 residues long: Large ribosomal subunit protein bL31 (75 aa).

Zn(2+) contacts are provided by Cys-16, Cys-18, Cys-36, and Cys-39.

The protein belongs to the bacterial ribosomal protein bL31 family. Type A subfamily. In terms of assembly, part of the 50S ribosomal subunit. Requires Zn(2+) as cofactor.

Its function is as follows. Binds the 23S rRNA. The polypeptide is Large ribosomal subunit protein bL31 (Desulforapulum autotrophicum (strain ATCC 43914 / DSM 3382 / VKM B-1955 / HRM2) (Desulfobacterium autotrophicum)).